The following is a 212-amino-acid chain: Pyrrolidone-carboxylate peptidase (212 aa).

Residues E78, C141, and H165 contribute to the active site.

This sequence belongs to the peptidase C15 family. Homotetramer.

The protein resides in the cytoplasm. The enzyme catalyses Release of an N-terminal pyroglutamyl group from a polypeptide, the second amino acid generally not being Pro.. Removes 5-oxoproline from various penultimate amino acid residues except L-proline. The chain is Pyrrolidone-carboxylate peptidase from Staphylococcus aureus (strain Mu3 / ATCC 700698).